The sequence spans 622 residues: MKTLLIHSDYLEFEAKEKTKVAEKTDVLNGKMDECLTVFIAVEKDDESDPNAVVKNAVEEIIKTADNLKVKNVVVYPYAHLSSDLGSPATAKEILAEIESELSNNYEVLRAPFGWYKSFKISCKGHPLSELSRKITTDRKEEVKKEKVVSKFYIIDGESQNLTEVNDEIIAKMEDKRLLALLKHELEIKEEATERGEPPHVKYIKEKEICDYEPSSDAGHFRWYPKGKLIRDLLSDYVYNLVVERGGMPVETPVMYDLQNNAIREHADKFGERQYRFTQGGKDLMLRFAACFGQFMMKKDMYLLPKHLPLRLYELSTYSFRYEQRGELVGLKRLRAFTMPDMHTVCMDMKQAMEAFEDQLWMGLKTGDDFKTPYAIIFRFTQDFFDENKEWFFAMAKEYKQKYGKDAILEILSGRKHYWVGKVDMAVVDSFGRPIENPTVQIDVESAERFGIVVHDGDKKVHPIILHCSPTGSVERVLCGLLENAYLNTLENKPPALPTWLTPIQARVIPVGDKHEEYALEVVNKLRSSGIRADFDDREESMGKKIRNAGTDWVNYVVVIGDSEMESGKLTVTVREESELKKPKKESLSVEELIEKISSETIGAPKRPLPLPMKCSMQPIFR.

Positions 1-136 are editing domain; sequence MKTLLIHSDY…PLSELSRKIT (136 aa). Positions 199-498 are catalytic; that stretch reads PHVKYIKEKE…TLENKPPALP (300 aa). Residues Cys-291, His-343, and His-467 each contribute to the Zn(2+) site.

Belongs to the class-II aminoacyl-tRNA synthetase family. In terms of assembly, homodimer. The cofactor is Zn(2+).

The protein localises to the cytoplasm. The enzyme catalyses tRNA(Thr) + L-threonine + ATP = L-threonyl-tRNA(Thr) + AMP + diphosphate + H(+). In terms of biological role, catalyzes the attachment of threonine to tRNA(Thr) in a two-step reaction: L-threonine is first activated by ATP to form Thr-AMP and then transferred to the acceptor end of tRNA(Thr). Also edits incorrectly charged L-seryl-tRNA(Thr). In Methanococcus maripaludis (strain DSM 14266 / JCM 13030 / NBRC 101832 / S2 / LL), this protein is Threonine--tRNA ligase.